The sequence spans 333 residues: Fructose-1,6-bisphosphatase class 1 1 (333 aa).

The Mg(2+) site is built by E81, D100, L102, and D103. Residues D103–S106 and N191 each bind substrate. E263 is a Mg(2+) binding site.

Belongs to the FBPase class 1 family. As to quaternary structure, homotetramer. The cofactor is Mg(2+).

The protein resides in the cytoplasm. The catalysed reaction is beta-D-fructose 1,6-bisphosphate + H2O = beta-D-fructose 6-phosphate + phosphate. Its pathway is carbohydrate biosynthesis; gluconeogenesis. Fructose-1,6-bisphosphatase II is not light-activated. The sequence is that of Fructose-1,6-bisphosphatase class 1 1 from Cereibacter sphaeroides (Rhodobacter sphaeroides).